The chain runs to 283 residues: NAD(P)H-hydrate epimerase (283 aa).

A mitochondrion-targeting transit peptide spans 1 to 28; sequence MLGVRALFGIGLLVTSRGGFVLTHTRAC. The region spanning 61-270 is the YjeF N-terminal domain; the sequence is AQQIDEELFS…VLEQKYQLNL (210 aa). (6S)-NADPHX is bound at residue 115 to 119; sequence NNGGD. Positions 116 and 180 each coordinate K(+). (6S)-NADPHX contacts are provided by residues 184-190 and Asp213; that span reads GFSFKGA. Ser216 lines the K(+) pocket.

It belongs to the NnrE/AIBP family. In terms of assembly, homodimer. Interacts with apoa1a. Binds to high-density lipoprotein. The cofactor is K(+).

It localises to the mitochondrion. Its subcellular location is the secreted. The enzyme catalyses (6R)-NADHX = (6S)-NADHX. The catalysed reaction is (6R)-NADPHX = (6S)-NADPHX. Catalyzes the epimerization of the S- and R-forms of NAD(P)HX, a damaged form of NAD(P)H that is a result of enzymatic or heat-dependent hydration. This is a prerequisite for the S-specific NAD(P)H-hydrate dehydratase to allow the repair of both epimers of NAD(P)HX. In Danio rerio (Zebrafish), this protein is NAD(P)H-hydrate epimerase.